A 596-amino-acid chain; its full sequence is Beta-fructofuranosidase, insoluble isoenzyme 7 (596 aa).

A signal peptide spans 1-24; the sequence is MARLGLAVCAASFHLFLLLASTSS. Substrate is bound by residues 51-54, Q70, and W78; that span reads WQND. The active site involves D54. N82 is a glycosylation site (N-linked (GlcNAc...) asparagine). Residues 115-116, 179-180, and E234 contribute to the substrate site; these read WS and RD. An N-linked (GlcNAc...) asparagine glycan is attached at N330. A disulfide bridge connects residues C432 and C478. N552 carries N-linked (GlcNAc...) asparagine glycosylation.

The protein belongs to the glycosyl hydrolase 32 family.

Its subcellular location is the secreted. It localises to the extracellular space. The protein resides in the apoplast. The protein localises to the cell wall. It carries out the reaction Hydrolysis of terminal non-reducing beta-D-fructofuranoside residues in beta-D-fructofuranosides.. In terms of biological role, may play a role in sucrose partitioning during seed development. This chain is Beta-fructofuranosidase, insoluble isoenzyme 7 (CIN7), found in Oryza sativa subsp. indica (Rice).